Reading from the N-terminus, the 355-residue chain is 3-dehydroquinate synthase (355 aa).

NAD(+) is bound by residues 71–76, 105–109, 129–130, Lys142, and Lys151; these read EGEASK, GVVGD, and TS. The Zn(2+) site is built by Glu184, His246, and His263.

It belongs to the sugar phosphate cyclases superfamily. Dehydroquinate synthase family. It depends on Co(2+) as a cofactor. Zn(2+) serves as cofactor. The cofactor is NAD(+).

The protein resides in the cytoplasm. The enzyme catalyses 7-phospho-2-dehydro-3-deoxy-D-arabino-heptonate = 3-dehydroquinate + phosphate. Its pathway is metabolic intermediate biosynthesis; chorismate biosynthesis; chorismate from D-erythrose 4-phosphate and phosphoenolpyruvate: step 2/7. Its function is as follows. Catalyzes the conversion of 3-deoxy-D-arabino-heptulosonate 7-phosphate (DAHP) to dehydroquinate (DHQ). This is 3-dehydroquinate synthase from Streptococcus thermophilus (strain CNRZ 1066).